The chain runs to 710 residues: Early transcription factor 82 kDa subunit (710 aa).

This sequence belongs to the poxviridae VETF large subunit family. Heterodimer of a 70 kDa and a 82 kDa subunit. Part of the early transcription complex composed of ETF, RAP94/OPG109, and the DNA-directed RNA polymerase.

It localises to the virion. Acts with RNA polymerase to initiate transcription from early gene promoters. Is recruited by the RPO-associated protein of 94 kDa RAP94/OPG109 to form the early transcription complex, which also contains the core RNA polymerase. ETF heterodimer binds to early gene promoters. This Variola virus (isolate Human/India/Ind3/1967) (VARV) protein is Early transcription factor 82 kDa subunit (OPG133).